The chain runs to 242 residues: UDP-2,3-diacylglucosamine hydrolase (242 aa).

Mn(2+) is bound by residues aspartate 8, histidine 10, aspartate 41, asparagine 79, and histidine 114. Residue asparagine 79 to arginine 80 participates in substrate binding. Residues aspartate 122, lysine 164, lysine 167, and histidine 195 each contribute to the substrate site. Histidine 195 and histidine 197 together coordinate Mn(2+).

The protein belongs to the LpxH family. The cofactor is Mn(2+).

Its subcellular location is the cell inner membrane. The enzyme catalyses UDP-2-N,3-O-bis[(3R)-3-hydroxytetradecanoyl]-alpha-D-glucosamine + H2O = 2-N,3-O-bis[(3R)-3-hydroxytetradecanoyl]-alpha-D-glucosaminyl 1-phosphate + UMP + 2 H(+). It functions in the pathway glycolipid biosynthesis; lipid IV(A) biosynthesis; lipid IV(A) from (3R)-3-hydroxytetradecanoyl-[acyl-carrier-protein] and UDP-N-acetyl-alpha-D-glucosamine: step 4/6. Its function is as follows. Hydrolyzes the pyrophosphate bond of UDP-2,3-diacylglucosamine to yield 2,3-diacylglucosamine 1-phosphate (lipid X) and UMP by catalyzing the attack of water at the alpha-P atom. Involved in the biosynthesis of lipid A, a phosphorylated glycolipid that anchors the lipopolysaccharide to the outer membrane of the cell. This chain is UDP-2,3-diacylglucosamine hydrolase, found in Vibrio cholerae serotype O1 (strain ATCC 39315 / El Tor Inaba N16961).